The sequence spans 134 residues: ATP synthase epsilon chain (134 aa).

This sequence belongs to the ATPase epsilon chain family. As to quaternary structure, F-type ATPases have 2 components, CF(1) - the catalytic core - and CF(0) - the membrane proton channel. CF(1) has five subunits: alpha(3), beta(3), gamma(1), delta(1), epsilon(1). CF(0) has three main subunits: a, b and c.

It localises to the cell membrane. Functionally, produces ATP from ADP in the presence of a proton gradient across the membrane. The protein is ATP synthase epsilon chain of Clostridium botulinum (strain Eklund 17B / Type B).